The following is a 320-amino-acid chain: Ferrochelatase (320 aa).

Residues H194 and E275 each coordinate Fe cation.

The protein belongs to the ferrochelatase family.

Its subcellular location is the cytoplasm. The catalysed reaction is heme b + 2 H(+) = protoporphyrin IX + Fe(2+). It functions in the pathway porphyrin-containing compound metabolism; protoheme biosynthesis; protoheme from protoporphyrin-IX: step 1/1. Catalyzes the ferrous insertion into protoporphyrin IX. The polypeptide is Ferrochelatase (Vibrio cholerae serotype O1 (strain ATCC 39315 / El Tor Inaba N16961)).